The sequence spans 375 residues: Growth/differentiation factor 8 (375 aa).

The first 23 residues, 1-23 (MQKLAVYVYIYLFMLISVDPVAL), serve as a signal peptide directing secretion. A propeptide spanning residues 24 to 266 (DDGSQPTENA…VTDTPKRSRR (243 aa)) is cleaved from the precursor. N-linked (GlcNAc...) asparagine glycosylation is present at N71. Intrachain disulfides connect C272-C282, C281-C340, C309-C372, and C313-C374.

This sequence belongs to the TGF-beta family. As to quaternary structure, homodimer; disulfide-linked.

The protein localises to the secreted. Acts specifically as a negative regulator of skeletal muscle growth. This chain is Growth/differentiation factor 8 (MSTN), found in Anser anser anser (Western greylag goose).